A 275-amino-acid chain; its full sequence is 5'-nucleotidase SurE (275 aa).

Positions 14, 15, 46, and 104 each coordinate a divalent metal cation.

This sequence belongs to the SurE nucleotidase family. A divalent metal cation serves as cofactor.

The protein localises to the cytoplasm. It carries out the reaction a ribonucleoside 5'-phosphate + H2O = a ribonucleoside + phosphate. Nucleotidase that shows phosphatase activity on nucleoside 5'-monophosphates. This Synechocystis sp. (strain ATCC 27184 / PCC 6803 / Kazusa) protein is 5'-nucleotidase SurE.